The primary structure comprises 487 residues: Protein nucleotidyltransferase YdiU (487 aa).

Residues G91, G93, R94, K114, D126, G127, R177, and R184 each contribute to the ATP site. The active-site Proton acceptor is the D253. 2 residues coordinate Mg(2+): N254 and D263. D263 contacts ATP.

Belongs to the SELO family. Requires Mg(2+) as cofactor. The cofactor is Mn(2+).

It catalyses the reaction L-seryl-[protein] + ATP = 3-O-(5'-adenylyl)-L-seryl-[protein] + diphosphate. The catalysed reaction is L-threonyl-[protein] + ATP = 3-O-(5'-adenylyl)-L-threonyl-[protein] + diphosphate. It carries out the reaction L-tyrosyl-[protein] + ATP = O-(5'-adenylyl)-L-tyrosyl-[protein] + diphosphate. The enzyme catalyses L-histidyl-[protein] + UTP = N(tele)-(5'-uridylyl)-L-histidyl-[protein] + diphosphate. It catalyses the reaction L-seryl-[protein] + UTP = O-(5'-uridylyl)-L-seryl-[protein] + diphosphate. The catalysed reaction is L-tyrosyl-[protein] + UTP = O-(5'-uridylyl)-L-tyrosyl-[protein] + diphosphate. Functionally, nucleotidyltransferase involved in the post-translational modification of proteins. It can catalyze the addition of adenosine monophosphate (AMP) or uridine monophosphate (UMP) to a protein, resulting in modifications known as AMPylation and UMPylation. The sequence is that of Protein nucleotidyltransferase YdiU from Yersinia pestis (strain Pestoides F).